Here is a 314-residue protein sequence, read N- to C-terminus: Hydroxyethylthiazole kinase (314 aa).

A compositionally biased stretch (low complexity) spans 1–13 (MSNSASSFADVSS). The disordered stretch occupies residues 1–24 (MSNSASSFADVSSGCTAGTPVPAD). Position 70 (Met-70) interacts with substrate. 2 residues coordinate ATP: Arg-145 and Ser-217. Gly-244 is a binding site for substrate.

The protein belongs to the Thz kinase family. Requires Mg(2+) as cofactor.

It carries out the reaction 5-(2-hydroxyethyl)-4-methylthiazole + ATP = 4-methyl-5-(2-phosphooxyethyl)-thiazole + ADP + H(+). It participates in cofactor biosynthesis; thiamine diphosphate biosynthesis; 4-methyl-5-(2-phosphoethyl)-thiazole from 5-(2-hydroxyethyl)-4-methylthiazole: step 1/1. Its function is as follows. Catalyzes the phosphorylation of the hydroxyl group of 4-methyl-5-beta-hydroxyethylthiazole (THZ). This is Hydroxyethylthiazole kinase from Bifidobacterium longum subsp. infantis (strain ATCC 15697 / DSM 20088 / JCM 1222 / NCTC 11817 / S12).